The chain runs to 334 residues: Phenylalanine--tRNA ligase alpha subunit (334 aa).

Glu249 contacts Mg(2+).

Belongs to the class-II aminoacyl-tRNA synthetase family. Phe-tRNA synthetase alpha subunit type 1 subfamily. Tetramer of two alpha and two beta subunits. Mg(2+) serves as cofactor.

It is found in the cytoplasm. The enzyme catalyses tRNA(Phe) + L-phenylalanine + ATP = L-phenylalanyl-tRNA(Phe) + AMP + diphosphate + H(+). The protein is Phenylalanine--tRNA ligase alpha subunit of Desulfatibacillum aliphaticivorans.